We begin with the raw amino-acid sequence, 27 residues long: Snake venom serine protease Afaacytin alpha/beta/beta' chains (27 aa).

Residues Val1–Glu27 form the Peptidase S1 domain.

Belongs to the peptidase S1 family. Snake venom subfamily. As to quaternary structure, heterodimer of an alpha and a beta chain. Subunit beta is constituted of two disulfide-linked polypeptidic chains, beta and beta'. Calcium appears to be required for structural cohesion of the molecule. In terms of processing, both chains alpha and beta are N-glycosylated. In terms of tissue distribution, expressed by the venom gland.

It is found in the secreted. Its activity is regulated as follows. Inhibited by diisopropylfluorophosphate (DFP), benzamidine, heparin and hirudin, but not by plasmatic thrombin inhibitors, antithrombin-III and ecotin. Snake venom serine protease that exhibits alpha-fibrinase and beta-fibrinogenase activities. It replaces missing factors VIII (F8) and IX (F9) in deficient plasmas by activating purified human factor X (F10) into factor Xa. It releases serotonin from platelets and induces platelet aggregation in human (but not in rabbit). Has caseinolytic, arginine-esterase and amidase activities. The protein is Snake venom serine protease Afaacytin alpha/beta/beta' chains of Cerastes cerastes (Horned desert viper).